The primary structure comprises 150 residues: Aspartate 1-decarboxylase (150 aa).

Ser24 functions as the Schiff-base intermediate with substrate; via pyruvic acid in the catalytic mechanism. A Pyruvic acid (Ser) modification is found at Ser24. Residue Thr56 coordinates substrate. Tyr57 functions as the Proton donor in the catalytic mechanism. 72 to 74 (GAA) serves as a coordination point for substrate.

The protein belongs to the PanD family. In terms of assembly, heterooctamer of four alpha and four beta subunits. Pyruvate is required as a cofactor. Post-translationally, is synthesized initially as an inactive proenzyme, which is activated by self-cleavage at a specific serine bond to produce a beta-subunit with a hydroxyl group at its C-terminus and an alpha-subunit with a pyruvoyl group at its N-terminus.

It localises to the cytoplasm. It catalyses the reaction L-aspartate + H(+) = beta-alanine + CO2. Its pathway is cofactor biosynthesis; (R)-pantothenate biosynthesis; beta-alanine from L-aspartate: step 1/1. Catalyzes the pyruvoyl-dependent decarboxylation of aspartate to produce beta-alanine. This chain is Aspartate 1-decarboxylase, found in Xanthobacter autotrophicus (strain ATCC BAA-1158 / Py2).